The following is a 177-amino-acid chain: NADH-quinone oxidoreductase subunit B (177 aa).

The [4Fe-4S] cluster site is built by Cys36, Cys37, Cys101, and Cys130.

It belongs to the complex I 20 kDa subunit family. In terms of assembly, NDH-1 is composed of 14 different subunits. Subunits NuoB, C, D, E, F, and G constitute the peripheral sector of the complex. It depends on [4Fe-4S] cluster as a cofactor.

Its subcellular location is the cell inner membrane. It catalyses the reaction a quinone + NADH + 5 H(+)(in) = a quinol + NAD(+) + 4 H(+)(out). Its function is as follows. NDH-1 shuttles electrons from NADH, via FMN and iron-sulfur (Fe-S) centers, to quinones in the respiratory chain. The immediate electron acceptor for the enzyme in this species is believed to be ubiquinone. Couples the redox reaction to proton translocation (for every two electrons transferred, four hydrogen ions are translocated across the cytoplasmic membrane), and thus conserves the redox energy in a proton gradient. The sequence is that of NADH-quinone oxidoreductase subunit B from Hydrogenobaculum sp. (strain Y04AAS1).